The sequence spans 99 residues: Fetal and adult testis-expressed transcript protein homolog (99 aa).

Residues 79-98 traverse the membrane as a helical segment; the sequence is AALFTLLVSVCIANLWLWVH.

In terms of assembly, interacts with BIK and RNF183. Interacts with IMMT/MIC60and EMD.

The protein resides in the mitochondrion. It is found in the mitochondrion outer membrane. The protein localises to the endoplasmic reticulum membrane. Involved in the regulation of endoplasmic reticulum (ER)-mitochondria coupling. Negatively regulates the ER-mitochondria distance and Ca(2+) transfer from ER to mitochondria possibly implicating it in the regulation of apoptosis. May collaborate with RNF183 to restrain BIK protein levels thus regulating apoptotic signaling. In Mus musculus (Mouse), this protein is Fetal and adult testis-expressed transcript protein homolog (Fate1).